The following is a 396-amino-acid chain: MATIFFAEPELVIGHGRKVLFLNPGDLQIFKEIELPPDLTTCGLKTVEPVPAPGHPASSSKQQPAALKEATGSVKVEVSIQNVTYSPDRQLLALTTAGQKAVLLYKSRPENAQLLSIRPLARASSALRFCSDGSSVLVTDKTGDCYQYDCVEVDASPRLLLGHLSIVYDVLWSEDQQYIITCDRDDKIRVTNYPATFDIHSYCLGHKEFVSGLAMLTEQHIISASGDKTLRVWNYTCGKELLLHELPAPAVRMLVRQLEPEKTYEVAVLFYDYVDAIGVYRLEQTTTESWSITSTQLVRAEAGTWNICNFALTDDRIYVTGAENERLTLRVYDSRNGERASGLPEGWLKMVLDNLDVAAFMPEDLSVWFKKRFDNVSEYLERKKRRIEEQKQQKCG.

WD repeat units lie at residues 75–115 (KVEV…AQLL), 162–201 (GHLS…DIHS), 205–243 (GHKE…ELLL), and 302–342 (AGTW…RASG).

It belongs to the WD repeat TRM82 family. As to quaternary structure, forms a heterodimer with the catalytic subunit Mettl1. Interacts with mei-P26 and weakly interacts with bgcn; required for the function or formation of the mei-P26-bgcn-bam-sxl complex. Interacts with nanos; may be involved in mei-P26-dependent derepression of the BMP signaling pathway. Interacts with Myc; the interaction may be mediated by mei-P26 and may be involved in the regulation of ribosome biogenesis. As to expression, in testis, it is present at high level in hub cells, a niche for germline stem cells of testis. Ubiquitously expressed in all testicular cells throughout spermatogenesis. Ubiquitously expressed in all germline and somatic cells of the ovary.

The protein resides in the nucleus. It localises to the cytoplasm. It participates in tRNA modification; N(7)-methylguanine-tRNA biosynthesis. Required for the Mettl1-dependent formation of N(7)-methylguanine at position 46 (m7G46) in tRNA. In the Mettl1-wuho methyltransferase complex, it is required to stabilize and induce conformational changes of the catalytic subunit. Required for binding of nanos mRNA and repression of translation by the mei-P26-bgcn-bam-sxl complex. May cooperate with mei-P26 and nanos to derepress the BMP signaling pathway. May cooperate with mei-P26 to suppress expression of a subset of microRNAs. May cooperate with mei-P26 to regulate bam expression levels in germline cells during gametogenesis. Required to promote mitosis to meiosis transition during gametogenesis. May regulate germline cell division in part by regulating ribosome biogenesis. The chain is tRNA (guanine-N(7)-)-methyltransferase non-catalytic subunit wuho from Drosophila pseudoobscura pseudoobscura (Fruit fly).